The following is a 381-amino-acid chain: Alcohol dehydrogenase class-3 (381 aa).

Cys49 provides a ligand contact to Zn(2+). His50 contributes to the NAD(+) binding site. Positions 51 and 71 each coordinate an alcohol. 7 residues coordinate Zn(2+): His71, Glu72, Cys101, Cys104, Cys107, Cys115, and Cys179. Residues 204-209, Asp228, Lys233, Ile274, 297-299, 322-324, and Arg374 each bind NAD(+); these read GLGTVG, VGV, and TAF.

The protein belongs to the zinc-containing alcohol dehydrogenase family. Class-III subfamily. As to quaternary structure, homodimer. Zn(2+) is required as a cofactor. In terms of tissue distribution, expressed at low levels in the leaves.

The protein resides in the cytoplasm. The enzyme catalyses a primary alcohol + NAD(+) = an aldehyde + NADH + H(+). The catalysed reaction is a secondary alcohol + NAD(+) = a ketone + NADH + H(+). It carries out the reaction S-(hydroxymethyl)glutathione + NADP(+) = S-formylglutathione + NADPH + H(+). It catalyses the reaction S-(hydroxymethyl)glutathione + NAD(+) = S-formylglutathione + NADH + H(+). The sequence is that of Alcohol dehydrogenase class-3 (FDH) from Zea mays (Maize).